The sequence spans 345 residues: V-type proton ATPase subunit d (345 aa).

Met1 carries the N-acetylmethionine modification.

It belongs to the V-ATPase V0D/AC39 subunit family. In terms of assembly, V-ATPase is a heteromultimeric enzyme composed of a peripheral catalytic V1 complex (components A to H) attached to an integral membrane V0 proton pore complex (components: a, c, c', c'', d, e, f and VOA1).

It is found in the vacuole membrane. Its function is as follows. Subunit of the V0 complex of vacuolar(H+)-ATPase (V-ATPase), a multisubunit enzyme composed of a peripheral complex (V1) that hydrolyzes ATP and a membrane integral complex (V0) that translocates protons. V-ATPase is responsible for acidifying and maintaining the pH of intracellular compartments. This subunit is a non-integral membrane component of the membrane pore domain and is required for proper assembly of the V0 sector. Might be involved in the regulated assembly of V1 subunits onto the membrane sector or alternatively may prevent the passage of protons through V0 pores. The sequence is that of V-type proton ATPase subunit d from Saccharomyces cerevisiae (strain ATCC 204508 / S288c) (Baker's yeast).